Reading from the N-terminus, the 104-residue chain is ATP-dependent Clp protease adapter protein ClpS (104 aa).

Belongs to the ClpS family. In terms of assembly, binds to the N-terminal domain of the chaperone ClpA.

In terms of biological role, involved in the modulation of the specificity of the ClpAP-mediated ATP-dependent protein degradation. This chain is ATP-dependent Clp protease adapter protein ClpS, found in Paraburkholderia xenovorans (strain LB400).